A 310-amino-acid polypeptide reads, in one-letter code: Methionyl-tRNA formyltransferase (310 aa).

Residue 109-112 (SLLP) coordinates (6S)-5,6,7,8-tetrahydrofolate.

Belongs to the Fmt family.

The catalysed reaction is L-methionyl-tRNA(fMet) + (6R)-10-formyltetrahydrofolate = N-formyl-L-methionyl-tRNA(fMet) + (6S)-5,6,7,8-tetrahydrofolate + H(+). Attaches a formyl group to the free amino group of methionyl-tRNA(fMet). The formyl group appears to play a dual role in the initiator identity of N-formylmethionyl-tRNA by promoting its recognition by IF2 and preventing the misappropriation of this tRNA by the elongation apparatus. The protein is Methionyl-tRNA formyltransferase of Staphylococcus epidermidis (strain ATCC 12228 / FDA PCI 1200).